Consider the following 198-residue polypeptide: Glycerol-3-phosphate acyltransferase (198 aa).

The next 6 helical transmembrane spans lie at 5–25 (YLIILGIVCYFIGNISGSIAI), 55–75 (VGLATFLIDFFKGLLCAYLGF), 79–99 (GSLGILVCGLLCVIGHILPVL), 114–134 (VLLFAQPLQVLILLILFLIVV), 139–159 (YVSLGSVLGCISAVIYGLIYI), and 164–184 (YIGLIYILLGIISLFKHRSNI).

The protein belongs to the PlsY family. As to quaternary structure, probably interacts with PlsX.

The protein localises to the cell membrane. The enzyme catalyses an acyl phosphate + sn-glycerol 3-phosphate = a 1-acyl-sn-glycero-3-phosphate + phosphate. It functions in the pathway lipid metabolism; phospholipid metabolism. In terms of biological role, catalyzes the transfer of an acyl group from acyl-phosphate (acyl-PO(4)) to glycerol-3-phosphate (G3P) to form lysophosphatidic acid (LPA). This enzyme utilizes acyl-phosphate as fatty acyl donor, but not acyl-CoA or acyl-ACP. The chain is Glycerol-3-phosphate acyltransferase from Finegoldia magna (strain ATCC 29328 / DSM 20472 / WAL 2508) (Peptostreptococcus magnus).